Reading from the N-terminus, the 64-residue chain is Conotoxin Cal6.24 (64 aa).

The first 22 residues, 1–22 (MKLTCVMIVAVLVLTVCKVVTS), serve as a signal peptide directing secretion. Cystine bridges form between C32–C50, C40–C54, and C49–C60.

As to expression, expressed by the venom duct.

The protein localises to the secreted. Its function is as follows. Probable neurotoxin. The protein is Conotoxin Cal6.24 of Californiconus californicus (California cone).